A 637-amino-acid polypeptide reads, in one-letter code: Early transcription factor 70 kDa subunit (637 aa).

In terms of domain architecture, Helicase ATP-binding spans 32-185 (RTIIDENRSV…GHIIDLMSEE (154 aa)). ATP is bound at residue 45 to 52 (HIMGSGKT). Positions 135-138 (DEAH) match the DEXH box motif. The Helicase C-terminal domain occupies 327–507 (KFKYFINRIQ…VLPFDIKKLL (181 aa)).

Belongs to the helicase family. VETF subfamily. As to quaternary structure, heterodimer of a 70 kDa and a 82 kDa subunit. Part of the early transcription complex composed of ETF, RAP94/OPG109, and the DNA-directed RNA polymerase.

It localises to the virion. Acts with RNA polymerase to initiate transcription from early gene promoters. Is recruited by the RPO-associated protein of 94 kDa RAP94/OPG109 to form the early transcription complex, which also contains the core RNA polymerase. ETF heterodimer binds to early gene promoters. This chain is Early transcription factor 70 kDa subunit (OPG118), found in Vaccinia virus (strain Ankara) (VACV).